Here is a 316-residue protein sequence, read N- to C-terminus: tRNA dimethylallyltransferase (316 aa).

ATP is bound at residue 13-20 (GPTAVGKT). Residue 15–20 (TAVGKT) participates in substrate binding. The interval 38–41 (DSIQ) is interaction with substrate tRNA.

Belongs to the IPP transferase family. In terms of assembly, monomer. Mg(2+) is required as a cofactor.

It carries out the reaction adenosine(37) in tRNA + dimethylallyl diphosphate = N(6)-dimethylallyladenosine(37) in tRNA + diphosphate. Catalyzes the transfer of a dimethylallyl group onto the adenine at position 37 in tRNAs that read codons beginning with uridine, leading to the formation of N6-(dimethylallyl)adenosine (i(6)A). The protein is tRNA dimethylallyltransferase of Staphylococcus carnosus (strain TM300).